A 446-amino-acid chain; its full sequence is tRNA (guanine-N(7)-)-methyltransferase non-catalytic subunit TRM82 (446 aa).

The disordered stretch occupies residues 67–97 (LTQTSEDTEQENTAPYKKQKSSVSKPIKVPK). Over residues 87–97 (SSVSKPIKVPK) the composition is skewed to low complexity. 3 WD repeats span residues 107–147 (PIYN…TENC), 202–243 (GHVS…IVKH), and 247–287 (GHRE…LLSK).

The protein belongs to the WD repeat TRM82 family. In terms of assembly, forms a heterodimer with the catalytic subunit TRM8.

The protein resides in the nucleus. Its pathway is tRNA modification; N(7)-methylguanine-tRNA biosynthesis. Required for the formation of N(7)-methylguanine at position 46 (m7G46) in tRNA. In the complex, it is required to stabilize and induce conformational changes of the catalytic subunit. The protein is tRNA (guanine-N(7)-)-methyltransferase non-catalytic subunit TRM82 of Debaryomyces hansenii (strain ATCC 36239 / CBS 767 / BCRC 21394 / JCM 1990 / NBRC 0083 / IGC 2968) (Yeast).